The following is a 413-amino-acid chain: Aminopeptidase PepS (413 aa).

A divalent metal cation contacts are provided by E253, E319, E343, H348, H381, and D383.

Belongs to the peptidase M29 family. As to quaternary structure, monomer. Requires Co(2+) as cofactor. Zn(2+) serves as cofactor. The cofactor is Mg(2+).

In terms of biological role, exhibits a high specificity towards peptides possessing arginine or aromatic amino acids at the N-terminus. Could be involved both in bacterial growth by supplying amino acids. This Streptococcus thermophilus protein is Aminopeptidase PepS (pepS).